The primary structure comprises 464 residues: MDRLVKTEFNEVNLNFQKNQKCSSSFKLTNLMHTMSVAVSLTTTNPTTFSINKPLSVIPPLSSSTYTLHLTNLNQPPLSEPADVITVRTSMLPTGKATTDDLRRLFNKPGPHVFRDAVITVILVGPTVAEYVISNYETRNLFTKAISVCTKSNLTNLMKPAVESGKVEYVTDLITAGGDVNFRDSNGKSLIPFAIRTGKLAVLKLLVANGCRINDSVDFVLHEAAIIDRVDVVKFLFESFCDELDVNSVNREMMTPIHVSASEGHVSLIEFFVSIGGNANAVDSRRWTPLHHAASRNHLKAVEFLLENSDVKYARELNGKTAFEIASESGHTRLFGVLRWGDALLQAARVDDVHALKKCLGEGAEVNRKDQNGWTPLHWASFKGRIKSVKVLLEHGAEVDSVDDAGYTPLHCAAEAGHLQVALVLIAHGGCQTNLKSFQHVSPIATFQKHVSLHYSTKKSETFA.

One can recognise an MSP domain in the interval 3–124 (RLVKTEFNEV…RDAVITVILV (122 aa)). ANK repeat units follow at residues 153–182 (NLTNLMKPAVESGKVEYVTDLITAGGDVNF), 186–215 (NGKSLIPFAIRTGKLAVLKLLVANGCRIND), 217–246 (VDFVLHEAAIIDRVDVVKFLFESFCDELDV), 252–281 (EMMTPIHVSASEGHVSLIEFFVSIGGNANA), 285–314 (RRWTPLHHAASRNHLKAVEFLLENSDVKYA), 318–347 (NGKTAFEIASESGHTRLFGVLRWGDALLQA), 349–368 (RVDDVHALKKCLGEGAEVNR), 372–401 (NGWTPLHWASFKGRIKSVKVLLEHGAEVDS), and 405–435 (AGYTPLHCAAEAGHLQVALVLIAHGGCQTNL).

Expressed in roots.

The protein resides in the cytoplasm. It is found in the nucleus. The protein localises to the cell membrane. In terms of biological role, may be involved in arbuscular mycorrhizal (AM) symbiosis with AM fungi and in nitrogen-fixing rhizobial bacteria symbiosis leading to the formation of root nodules. This is Protein VAPYRIN-LIKE from Medicago truncatula (Barrel medic).